A 117-amino-acid polypeptide reads, in one-letter code: Large ribosomal subunit protein bL20 (117 aa).

It belongs to the bacterial ribosomal protein bL20 family.

Binds directly to 23S ribosomal RNA and is necessary for the in vitro assembly process of the 50S ribosomal subunit. It is not involved in the protein synthesizing functions of that subunit. In Rickettsia peacockii (strain Rustic), this protein is Large ribosomal subunit protein bL20.